The following is a 502-amino-acid chain: UPF0371 protein CLH_2534 (502 aa).

Belongs to the UPF0371 family.

The sequence is that of UPF0371 protein CLH_2534 from Clostridium botulinum (strain Alaska E43 / Type E3).